Consider the following 326-residue polypeptide: tRNA(Ile)-lysidine synthase (326 aa).

Residue 25-30 participates in ATP binding; the sequence is SGGQDS.

The protein belongs to the tRNA(Ile)-lysidine synthase family.

The protein resides in the cytoplasm. It catalyses the reaction cytidine(34) in tRNA(Ile2) + L-lysine + ATP = lysidine(34) in tRNA(Ile2) + AMP + diphosphate + H(+). Its function is as follows. Ligates lysine onto the cytidine present at position 34 of the AUA codon-specific tRNA(Ile) that contains the anticodon CAU, in an ATP-dependent manner. Cytidine is converted to lysidine, thus changing the amino acid specificity of the tRNA from methionine to isoleucine. This is tRNA(Ile)-lysidine synthase from Prochlorococcus marinus (strain NATL1A).